A 428-amino-acid chain; its full sequence is GTPase Obg (428 aa).

An Obg domain is found at 1 to 158 (MFVDQVKVYV…RYIVLELKVL (158 aa)). The interval 117 to 143 (ARGGRGGRGNSRFATPANPAPQLSENG) is disordered. The region spanning 159–329 (ADVGLVGFPS…LLFEVANQLE (171 aa)) is the OBG-type G domain. Residues 165–172 (GFPSVGKS), 190–194 (FTTLV), 212–215 (DLPG), 282–285 (NKMD), and 310–312 (SAV) each bind GTP. 2 residues coordinate Mg(2+): Ser172 and Thr192. The OCT domain maps to 350–428 (TMENEEVPFN…LLEFEFEFID (79 aa)).

Belongs to the TRAFAC class OBG-HflX-like GTPase superfamily. OBG GTPase family. As to quaternary structure, monomer. Interacts with TasA (AC P54507) in pull-down experiments. It depends on Mg(2+) as a cofactor.

It localises to the cytoplasm. Its activity is regulated as follows. Inhibited by GDP; less than 20 uM ppGpp stimulates the GTPase, while higher concentrations inhibit. Its function is as follows. Necessary for the transition from vegetative growth to stage 0 or stage II of sporulation, but sporulation subsequent to these stages is unaffected at 45 degrees Celsius. This ts effect is probably due solely to the E-79 mutation. Required for expression of early sporulation genes, further suggesting a role in the induction of sporulation. Depletion effects on sporulation can be partially suppressed by missense mutations in spo0A. Strains depleted for obg stop growing after about 3 hours and do not induce the sigma-B factor following ethanol stress. It cofractionates with the ribosome and upstream stress response regulators RsbR, RsbS and RsbT in size fractionation columns, suggesting the ribosome might serve as a possible mediator of the activity of obg and the stress induction of sigma-B. In glycerol gradients partially associates with ribosomes; this is stabilized by a nonhydrolyzable GTP-analog and to a lesser extent GTP and GDP. An essential GTPase which binds GTP, GDP and possibly (p)ppGpp with moderate affinity, with high nucleotide exchange rates and a fairly low GTP hydrolysis rate. Plays a role in control of the cell cycle, stress response, ribosome biogenesis and in those bacteria that undergo differentiation, in morphogenesis control. In Bacillus subtilis (strain 168), this protein is GTPase Obg.